Here is a 294-residue protein sequence, read N- to C-terminus: Probable porphobilinogen deaminase (294 aa).

An S-(dipyrrolylmethanemethyl)cysteine modification is found at cysteine 233.

This sequence belongs to the HMBS family. Requires dipyrromethane as cofactor.

The catalysed reaction is 4 porphobilinogen + H2O = hydroxymethylbilane + 4 NH4(+). It participates in porphyrin-containing compound metabolism; protoporphyrin-IX biosynthesis; coproporphyrinogen-III from 5-aminolevulinate: step 2/4. Its function is as follows. Tetrapolymerization of the monopyrrole PBG into the hydroxymethylbilane pre-uroporphyrinogen in several discrete steps. The chain is Probable porphobilinogen deaminase from Sulfurisphaera tokodaii (strain DSM 16993 / JCM 10545 / NBRC 100140 / 7) (Sulfolobus tokodaii).